The sequence spans 594 residues: UvrABC system protein C (594 aa).

The region spanning 14-91 (DQPGCYLMKD…IKKHDPKYNI (78 aa)) is the GIY-YIG domain. Residues 196–231 (KEVRSELETKMYEASEKLEFERAKELRDQIAHIDAI) form the UVR domain.

Belongs to the UvrC family. As to quaternary structure, interacts with UvrB in an incision complex.

It localises to the cytoplasm. In terms of biological role, the UvrABC repair system catalyzes the recognition and processing of DNA lesions. UvrC both incises the 5' and 3' sides of the lesion. The N-terminal half is responsible for the 3' incision and the C-terminal half is responsible for the 5' incision. In Bacillus cereus (strain Q1), this protein is UvrABC system protein C.